A 100-amino-acid chain; its full sequence is Large ribosomal subunit protein uL23 (100 aa).

The protein belongs to the universal ribosomal protein uL23 family. In terms of assembly, part of the 50S ribosomal subunit. Contacts protein L29, and trigger factor when it is bound to the ribosome.

Functionally, one of the early assembly proteins it binds 23S rRNA. One of the proteins that surrounds the polypeptide exit tunnel on the outside of the ribosome. Forms the main docking site for trigger factor binding to the ribosome. The polypeptide is Large ribosomal subunit protein uL23 (Mycobacterium tuberculosis (strain ATCC 25177 / H37Ra)).